A 394-amino-acid chain; its full sequence is Growth-regulating factor 4 (394 aa).

Residues 64–99 (PFTAAQYEELEQQALIYKYLVAGVPVPPDLVLPIRR) enclose the QLQ domain. The 45-residue stretch at 125–169 (DPEPGRCRRTDGKKWRCSKEAAPDSKYCERHMHRGRNRSRKPVET) folds into the WRC domain. 2 consecutive short sequence motifs (bipartite nuclear localization signal) follow at residues 130–140 (RCRRTDGKKWR) and 158–165 (RGRNRSRK). A disordered region spans residues 156-180 (MHRGRNRSRKPVETQLVAQSQPPSS). Residues 170-180 (QLVAQSQPPSS) are compositionally biased toward low complexity.

This sequence belongs to the GRF family. Interacts with GIF1. Interacts with GSK2. In terms of tissue distribution, expressed in stems. Expressed in panicles.

It localises to the nucleus. Its activity is regulated as follows. Transactivation activity is repressed by GSK2. Functionally, transcription activator that plays a role in the regulation of meristematic function in leaves, stems and inflorescences. Transcription activator that plays a regulatory role in grain development. Positively regulates grain size by promoting cell division and expansion, leading to increased grain length and width. Positively regulates the expression of genes promoting cell proliferation. Activates the expression of expansin genes to promote cell expansion and grain size. May promote grain size by activating brassinosteroid responses. Component of a network formed by the microRNA396 (miRNA396), the GRFs and their interacting factors (GIFs) acting in the regulation of meristem function, at least partially through the control of cell proliferation. Component of the miRNA396c-GRF4-GIF1 regulatory module that plays an important role in grain size determination. This chain is Growth-regulating factor 4, found in Oryza sativa subsp. japonica (Rice).